The chain runs to 125 residues: Prepro-urotensin II-alpha (125 aa).

An N-terminal signal peptide occupies residues 1-21 (MMCNLLLSFSVLLLSCTHLVA). A propeptide spanning residues 109–111 (QFR) is cleaved from the precursor. A disulfide bridge links cysteine 119 with cysteine 124.

This sequence belongs to the urotensin-2 family.

The protein localises to the secreted. Its function is as follows. Urotensin is found in the teleost caudal neurosecretory system. It has a suggested role in osmoregulation and as a corticotropin-releasing factor. The non-hormonal portion of this precursor may be a urotensin binding protein, urophysin. The sequence is that of Prepro-urotensin II-alpha from Cyprinus carpio (Common carp).